A 253-amino-acid chain; its full sequence is ATP synthase subunit b 1 (253 aa).

Residues 5–27 (GWTVALQAVNFLILVLLLRHFLY) traverse the membrane as a helical segment.

Belongs to the ATPase B chain family. F-type ATPases have 2 components, F(1) - the catalytic core - and F(0) - the membrane proton channel. F(1) has five subunits: alpha(3), beta(3), gamma(1), delta(1), epsilon(1). F(0) has three main subunits: a(1), b(2) and c(10-14). The alpha and beta chains form an alternating ring which encloses part of the gamma chain. F(1) is attached to F(0) by a central stalk formed by the gamma and epsilon chains, while a peripheral stalk is formed by the delta and b chains.

Its subcellular location is the cell inner membrane. Its function is as follows. F(1)F(0) ATP synthase produces ATP from ADP in the presence of a proton or sodium gradient. F-type ATPases consist of two structural domains, F(1) containing the extramembraneous catalytic core and F(0) containing the membrane proton channel, linked together by a central stalk and a peripheral stalk. During catalysis, ATP synthesis in the catalytic domain of F(1) is coupled via a rotary mechanism of the central stalk subunits to proton translocation. Functionally, component of the F(0) channel, it forms part of the peripheral stalk, linking F(1) to F(0). The protein is ATP synthase subunit b 1 of Rhodospirillum centenum (strain ATCC 51521 / SW).